The primary structure comprises 501 residues: Glycoprotein 3-alpha-L-fucosyltransferase A (501 aa).

Residues 1–39 (MGVFSNLRGPKIGLTHEELPVVANGSTSSSSSPSSFKRK) are Cytoplasmic-facing. The helical; Signal-anchor for type II membrane protein transmembrane segment at 40 to 60 (VSTFLPICVALVVIIEIGFLC) threads the bilayer. Over 61–501 (RLDNASLVDT…PCPKFEVVFV (441 aa)) the chain is Lumenal. Asn-64, Asn-337, Asn-420, and Asn-481 each carry an N-linked (GlcNAc...) asparagine glycan.

This sequence belongs to the glycosyltransferase 10 family. Mg(2+) serves as cofactor. The cofactor is Mn(2+). Post-translationally, glycosylation may be important for enzymatic activity.

It is found in the golgi apparatus. It localises to the golgi stack membrane. The enzyme catalyses N(4)-{beta-D-GlcNAc-(1-&gt;2)-alpha-D-Man-(1-&gt;3)-[beta-D-GlcNAc-(1-&gt;2)-alpha-D-Man-(1-&gt;6)]-beta-D-Man-(1-&gt;4)-beta-D-GlcNAc-(1-&gt;4)-beta-D-GlcNAc}-L-asparaginyl-[protein] + GDP-beta-L-fucose = N(4)-{beta-D-GlcNAc-(1-&gt;2)-alpha-D-Man-(1-&gt;3)-[beta-D-GlcNAc-(1-&gt;2)-alpha-D-Man-(1-&gt;6)]-beta-D-Man-(1-&gt;4)-beta-D-GlcNAc-(1-&gt;4)-[alpha-L-Fuc(1-&gt;3)]-beta-D-GlcNAc}-L-asparaginyl-[protein] + GDP + H(+). Its pathway is protein modification; protein glycosylation. Its activity is regulated as follows. Inhibited by Cu(2+) and Zn(2+). Its function is as follows. Involved in cell wall synthesis. Preferentially catalyzes the addition of fucose in alpha 1-3 linkage to the first GlcNAc residue next to the peptide chains in N-glycans. This chain is Glycoprotein 3-alpha-L-fucosyltransferase A (FUT11), found in Arabidopsis thaliana (Mouse-ear cress).